The following is a 513-amino-acid chain: Xylose import ATP-binding protein XylG (513 aa).

ABC transporter domains follow at residues 5–242 and 259–505; these read LEMK…VERE and LRIE…LRSE. Residue 37-44 coordinates ATP; the sequence is GENGSGKS.

Belongs to the ABC transporter superfamily. Xylose importer (TC 3.A.1.2.4) family. The complex is composed of two ATP-binding proteins (XylG), two transmembrane proteins (XylH) and a solute-binding protein (XylF).

It is found in the cell inner membrane. The enzyme catalyses D-xylose(out) + ATP + H2O = D-xylose(in) + ADP + phosphate + H(+). In terms of biological role, part of the ABC transporter complex XylFGH involved in xylose import. Responsible for energy coupling to the transport system. This Shigella flexneri protein is Xylose import ATP-binding protein XylG.